The sequence spans 309 residues: MAELKAVHQDAADAGHRSHVSVKAVWRELSSVVKIGIVNSNLITTFAGMWLAFYFTGEHFLENLHLVFFTLFGAALVIAGSCAINNYIDRDIDQYMERTKARPTVTGTMDPRRVLWLGIGLVAIGEMGLLMTTVTAAVVGLIGMATYVFLYTLWTKRHYTINTVVGSISGAVPPVIGWTAVDPEFHIVPLILFLIMFLWQPPHFLALAMKRCEEYRAAGIPMLPVVHGFAMTKRQIIVWVACLLPLPFYLFSLGVPFLIVATLLNVGWLLLGLAGLKMKDDIKWAKWMFVYSLNYLTILFVAMIIATLW.

The next 9 helical transmembrane spans lie at 35–55, 64–84, 114–134, 135–155, 161–181, 187–207, 231–251, 253–273, and 289–309; these read IGIVNSNLITTFAGMWLAFYF, LHLVFFTLFGAALVIAGSCAI, VLWLGIGLVAIGEMGLLMTTV, TAAVVGLIGMATYVFLYTLWT, INTVVGSISGAVPPVIGWTAV, IVPLILFLIMFLWQPPHFLAL, MTKRQIIVWVACLLPLPFYLF, LGVPFLIVATLLNVGWLLLGL, and FVYSLNYLTILFVAMIIATLW.

The protein belongs to the UbiA prenyltransferase family. Protoheme IX farnesyltransferase subfamily. In terms of assembly, interacts with CtaA.

The protein localises to the cell membrane. It carries out the reaction heme b + (2E,6E)-farnesyl diphosphate + H2O = Fe(II)-heme o + diphosphate. It participates in porphyrin-containing compound metabolism; heme O biosynthesis; heme O from protoheme: step 1/1. Functionally, converts heme B (protoheme IX) to heme O by substitution of the vinyl group on carbon 2 of heme B porphyrin ring with a hydroxyethyl farnesyl side group. This chain is Protoheme IX farnesyltransferase, found in Geobacillus kaustophilus (strain HTA426).